A 1171-amino-acid polypeptide reads, in one-letter code: Zinc finger BED domain-containing protein 4 (1171 aa).

Residues 25 to 62 (EEEDDDGIPPDSLERMDFKSEQEDMKQTDSGGERAGLG) form a disordered region. Basic and acidic residues predominate over residues 36 to 51 (SLERMDFKSEQEDMKQ). A Glycyl lysine isopeptide (Lys-Gly) (interchain with G-Cter in SUMO2) cross-link involves residue Lys43. BED-type zinc fingers lie at residues 115 to 172 (RKKS…LIQE) and 285 to 342 (RRRS…VLQE). Positions 136, 139, 160, 165, 306, 309, 330, and 335 each coordinate Zn(2+). The segment covering 362 to 385 (LLPPEGELSSVSSSPVKPVRESPS) has biased composition (low complexity). A disordered region spans residues 362 to 405 (LLPPEGELSSVSSSPVKPVRESPSASSSPDRLTEDLQSHLNPGD). 2 consecutive BED-type zinc fingers follow at residues 456 to 512 (RLKS…VGSQ) and 558 to 615 (KKTS…LKTE). Zn(2+)-binding residues include Cys477 and Cys480. A Glycyl lysine isopeptide (Lys-Gly) (interchain with G-Cter in SUMO2) cross-link involves residue Lys489. Residues His500, His505, Cys579, Cys582, His603, and His608 each contribute to the Zn(2+) site. Residues 614–640 (TEVSETARPSSPDTRVPRGTELSGASS) form a disordered region. Phosphoserine is present on Ser624. Residues 1086 to 1171 (LAYLEEEVLE…VNLPLIYFQY (86 aa)) form a required for homodimerization and nuclear accumulation region.

Homodimer; via C-terminus. Interacts with MYH9. Interacts with SAFB/SAFB1. In terms of tissue distribution, expressed in testis, heart, lung, and weakly expressed in brain, liver, muscle, placenta and small intestine. Expressed in the retina, found in the cone photoreceptors, Mueller cells, cone pedicles and in the innermost retinal layer.

It is found in the nucleus. The protein resides in the cytoplasm. Its subcellular location is the photoreceptor inner segment. Functionally, transcriptional regulator that binds to poly-guanine tracts in gene promoters and activates transcription. Able to bind single- and double-stranded DNA and RNA. The protein is Zinc finger BED domain-containing protein 4 (ZBED4) of Homo sapiens (Human).